Consider the following 130-residue polypeptide: Small ribosomal subunit protein uS9 (130 aa).

Positions 99–110 (KKAGFLTRDPRM) are enriched in basic and acidic residues. A disordered region spans residues 99-130 (KKAGFLTRDPRMKERKKYGLKKARRAPQFSKR). Basic residues predominate over residues 111-130 (KERKKYGLKKARRAPQFSKR).

Belongs to the universal ribosomal protein uS9 family.

The sequence is that of Small ribosomal subunit protein uS9 from Clostridium botulinum (strain Eklund 17B / Type B).